The sequence spans 416 residues: Dihydroorotase (416 aa).

Zn(2+)-binding residues include histidine 53 and histidine 55. Residues 55–57 (HLR) and asparagine 87 each bind substrate. Residues aspartate 145, histidine 172, histidine 225, and aspartate 298 each coordinate Zn(2+). Residue aspartate 298 is part of the active site. A substrate-binding site is contributed by histidine 302.

It belongs to the metallo-dependent hydrolases superfamily. DHOase family. Class I DHOase subfamily. Zn(2+) is required as a cofactor.

The enzyme catalyses (S)-dihydroorotate + H2O = N-carbamoyl-L-aspartate + H(+). The protein operates within pyrimidine metabolism; UMP biosynthesis via de novo pathway; (S)-dihydroorotate from bicarbonate: step 3/3. In terms of biological role, catalyzes the reversible cyclization of carbamoyl aspartate to dihydroorotate. The chain is Dihydroorotase from Deinococcus radiodurans (strain ATCC 13939 / DSM 20539 / JCM 16871 / CCUG 27074 / LMG 4051 / NBRC 15346 / NCIMB 9279 / VKM B-1422 / R1).